Reading from the N-terminus, the 188-residue chain is MPKASEIKKGFAIESNGKTLLVKDIEVTTPGGRGGAKIYKMRCTDLTTGARVDERYKSDDVVETVEMNKRAVVYSYADGDEHIFMDNEDYSQYTFKHNEVEDDMLFINEDTQGIHIILVDGSAVGLELPSSVELVIEETDPSIKGASASARTKPARFASGLVVQVPEYIATGDRVVINTAERKYMSRA.

Belongs to the elongation factor P family.

The sequence is that of Elongation factor P-like protein from Vibrio parahaemolyticus serotype O3:K6 (strain RIMD 2210633).